Reading from the N-terminus, the 245-residue chain is 1-(5-phosphoribosyl)-5-[(5-phosphoribosylamino)methylideneamino] imidazole-4-carboxamide isomerase (245 aa).

Asp8 (proton acceptor) is an active-site residue. Asp130 serves as the catalytic Proton donor.

Belongs to the HisA/HisF family.

Its subcellular location is the cytoplasm. It catalyses the reaction 1-(5-phospho-beta-D-ribosyl)-5-[(5-phospho-beta-D-ribosylamino)methylideneamino]imidazole-4-carboxamide = 5-[(5-phospho-1-deoxy-D-ribulos-1-ylimino)methylamino]-1-(5-phospho-beta-D-ribosyl)imidazole-4-carboxamide. The protein operates within amino-acid biosynthesis; L-histidine biosynthesis; L-histidine from 5-phospho-alpha-D-ribose 1-diphosphate: step 4/9. This is 1-(5-phosphoribosyl)-5-[(5-phosphoribosylamino)methylideneamino] imidazole-4-carboxamide isomerase from Pseudomonas putida (strain ATCC 47054 / DSM 6125 / CFBP 8728 / NCIMB 11950 / KT2440).